The primary structure comprises 266 residues: Hydroxyethylthiazole kinase (266 aa).

M46 is a substrate binding site. 2 residues coordinate ATP: R122 and S168. A substrate-binding site is contributed by G195.

This sequence belongs to the Thz kinase family. Requires Mg(2+) as cofactor.

The catalysed reaction is 5-(2-hydroxyethyl)-4-methylthiazole + ATP = 4-methyl-5-(2-phosphooxyethyl)-thiazole + ADP + H(+). Its pathway is cofactor biosynthesis; thiamine diphosphate biosynthesis; 4-methyl-5-(2-phosphoethyl)-thiazole from 5-(2-hydroxyethyl)-4-methylthiazole: step 1/1. Catalyzes the phosphorylation of the hydroxyl group of 4-methyl-5-beta-hydroxyethylthiazole (THZ). The polypeptide is Hydroxyethylthiazole kinase (Oleidesulfovibrio alaskensis (strain ATCC BAA-1058 / DSM 17464 / G20) (Desulfovibrio alaskensis)).